A 488-amino-acid chain; its full sequence is Glutamate--tRNA ligase (488 aa).

A 'HIGH' region motif is present at residues 16-26 (PSPTGEPHVGT). The 'KMSKS' region motif lies at 257–261 (KLSKR). Position 260 (lysine 260) interacts with ATP.

It belongs to the class-I aminoacyl-tRNA synthetase family. Glutamate--tRNA ligase type 1 subfamily. As to quaternary structure, monomer.

The protein resides in the cytoplasm. It catalyses the reaction tRNA(Glu) + L-glutamate + ATP = L-glutamyl-tRNA(Glu) + AMP + diphosphate. In terms of biological role, catalyzes the attachment of glutamate to tRNA(Glu) in a two-step reaction: glutamate is first activated by ATP to form Glu-AMP and then transferred to the acceptor end of tRNA(Glu). This Rhizobium johnstonii (strain DSM 114642 / LMG 32736 / 3841) (Rhizobium leguminosarum bv. viciae) protein is Glutamate--tRNA ligase.